The chain runs to 171 residues: Auxin-responsive protein IAA33 (171 aa).

Polar residues-rich tracts occupy residues methionine 1–serine 11 and aspartate 19–proline 32. Residues methionine 1–alanine 51 are disordered. Residues lysine 40 to serine 49 are compositionally biased toward low complexity. The 91-residue stretch at valine 72–glycine 162 folds into the PB1 domain.

This sequence belongs to the Aux/IAA family. In terms of assembly, homodimers and heterodimers.

The protein resides in the nucleus. Aux/IAA proteins are short-lived transcriptional factors that function as repressors of early auxin response genes at low auxin concentrations. Repression is thought to result from the interaction with auxin response factors (ARFs), proteins that bind to the auxin-responsive promoter element (AuxRE). Formation of heterodimers with ARF proteins may alter their ability to modulate early auxin response genes expression. This Arabidopsis thaliana (Mouse-ear cress) protein is Auxin-responsive protein IAA33 (IAA33).